The chain runs to 1894 residues: Plexin-A2 (1894 aa).

An N-terminal signal peptide occupies residues 1-34 (MEQRRFYLRAMQADNLSVVLLSVAWLLLARGTTG). N-linked (GlcNAc...) asparagine glycans are attached at residues Asn-15 and Asn-76. In terms of domain architecture, Sema spans 35–508 (MPQYSTFHSE…SERQVTRVPV (474 aa)). Over 35–1237 (MPQYSTFHSE…VISDSLLTLP (1203 aa)) the chain is Extracellular. 2 cysteine pairs are disulfide-bonded: Cys-94-Cys-103 and Cys-129-Cys-137. Residues Asn-163 and Asn-327 are each glycosylated (N-linked (GlcNAc...) asparagine). 8 disulfides stabilise this stretch: Cys-284/Cys-405, Cys-300/Cys-356, Cys-374/Cys-393, Cys-511/Cys-528, Cys-517/Cys-559, Cys-520/Cys-537, Cys-531/Cys-543, and Cys-594/Cys-613. N-linked (GlcNAc...) asparagine glycans are attached at residues Asn-598, Asn-696, and Asn-756. IPT/TIG domains are found at residues 858 to 951 (PQIT…QYTF), 954 to 1037 (PSVL…QFEY), 1041 to 1139 (PRVQ…KFIY), and 1143 to 1228 (PTFE…SVSV). N-linked (GlcNAc...) asparagine glycosylation is found at Asn-1180 and Asn-1205. A helical membrane pass occupies residues 1238–1258 (AIISIAAGGSLLLIIVIIVLI). Topologically, residues 1259–1894 (AYKRKSREND…HLINAMSIES (636 aa)) are cytoplasmic. Residues 1261–1310 (KRKSRENDLTLKRLQMQMDNLESRVALECKEAFAELQTDINELTSDLDRS) are a coiled coil. Ser-1612 is modified (phosphoserine).

Belongs to the plexin family. Homodimer. Interacts with RND1. Interacts directly with NRP1 and NRP2. The PLXNA2 homodimer interacts with a SEMA6A homodimer, giving rise to a heterotetramer.

It localises to the cell membrane. Functionally, coreceptor for SEMA3A and SEMA6A. Necessary for signaling by SEMA6A and class 3 semaphorins and subsequent remodeling of the cytoskeleton. Plays a role in axon guidance, invasive growth and cell migration. Class 3 semaphorins bind to a complex composed of a neuropilin and a plexin. The plexin modulates the affinity of the complex for specific semaphorins, and its cytoplasmic domain is required for the activation of down-stream signaling events in the cytoplasm. The protein is Plexin-A2 (Plxna2) of Mus musculus (Mouse).